Here is a 67-residue protein sequence, read N- to C-terminus: Guanine nucleotide-binding protein G(I)/G(S)/G(O) subunit gamma-13 (67 aa).

The residue at position 64 (Cys-64) is a Cysteine methyl ester. The S-farnesyl cysteine moiety is linked to residue Cys-64. Positions 65-67 are cleaved as a propeptide — removed in mature form; it reads TIL.

It belongs to the G protein gamma family. G proteins are composed of 3 units, alpha, beta and gamma.

The protein resides in the cell membrane. Its function is as follows. Guanine nucleotide-binding proteins (G proteins) are involved as a modulator or transducer in various transmembrane signaling systems. The beta and gamma chains are required for the GTPase activity, for replacement of GDP by GTP, and for G protein-effector interaction. The sequence is that of Guanine nucleotide-binding protein G(I)/G(S)/G(O) subunit gamma-13 (GNG13) from Homo sapiens (Human).